Consider the following 179-residue polypeptide: Insulin-like growth factor 2 (179 aa).

The N-terminal stretch at 1-24 is a signal peptide; sequence MGITAGKSVLVLLAFLAFASCCYA. The interval 25-52 is b; it reads AYRPSETLCGGELVDTLQFVCGDRGFYF. 3 disulfides stabilise this stretch: Cys-33–Cys-71, Cys-45–Cys-84, and Cys-70–Cys-75. The tract at residues 53–64 is c; the sequence is SRPSSRINRRSR. Residues 65–85 form an a region; it reads GIVEECCFRSCDLALLETYCA. Positions 86-91 are d; that stretch reads TPAKSE. A propeptide spans 92-179 (e peptide); the sequence is RDVSASTTVL…GGASSKASSD (88 aa). O-linked (GalNAc...) threonine glycosylation is present at Thr-106. O-linked (GalNAc...) serine glycosylation is present at Ser-154. Residues 160-179 are disordered; sequence ALPTQDPATHGGASSKASSD. Thr-163 carries an O-linked (GalNAc...) threonine glycan.

This sequence belongs to the insulin family. In terms of assembly, interacts with MYORG; this interaction is required for IGF2 secretion. Interacts with integrins ITGAV:ITGB3 and ITGA6:ITGB4; integrin-binding is required for IGF2 signaling. Interacts with IGFBP2. Proteolytically processed by PCSK4, proIGF2 is cleaved at Arg-128 and Arg-92 to generate big-IGF2 and mature IGF2.

The protein resides in the secreted. The insulin-like growth factors possess growth-promoting activity. Major fetal growth hormone in mammals. Plays a key role in regulating fetoplacental development. IGF2 is influenced by placental lactogen. Also involved in tissue differentiation. In adults, involved in glucose metabolism in adipose tissue, skeletal muscle and liver. Acts as a ligand for integrin which is required for IGF2 signaling. Positively regulates myogenic transcription factor MYOD1 function by facilitating the recruitment of transcriptional coactivators, thereby controlling muscle terminal differentiation. Inhibits myoblast differentiation and modulates metabolism via increasing the mitochondrial respiration rate. Functionally, preptin undergoes glucose-mediated co-secretion with insulin, and acts as a physiological amplifier of glucose-mediated insulin secretion. Exhibits osteogenic properties by increasing osteoblast mitogenic activity through phosphoactivation of MAPK1 and MAPK3. This chain is Insulin-like growth factor 2, found in Bos taurus (Bovine).